Here is a 180-residue protein sequence, read N- to C-terminus: Crossover junction endodeoxyribonuclease RuvC (180 aa).

Catalysis depends on residues D7, E66, and D138. 3 residues coordinate Mg(2+): D7, E66, and D138.

This sequence belongs to the RuvC family. In terms of assembly, homodimer which binds Holliday junction (HJ) DNA. The HJ becomes 2-fold symmetrical on binding to RuvC with unstacked arms; it has a different conformation from HJ DNA in complex with RuvA. In the full resolvosome a probable DNA-RuvA(4)-RuvB(12)-RuvC(2) complex forms which resolves the HJ. Mg(2+) is required as a cofactor.

It localises to the cytoplasm. The enzyme catalyses Endonucleolytic cleavage at a junction such as a reciprocal single-stranded crossover between two homologous DNA duplexes (Holliday junction).. Its function is as follows. The RuvA-RuvB-RuvC complex processes Holliday junction (HJ) DNA during genetic recombination and DNA repair. Endonuclease that resolves HJ intermediates. Cleaves cruciform DNA by making single-stranded nicks across the HJ at symmetrical positions within the homologous arms, yielding a 5'-phosphate and a 3'-hydroxyl group; requires a central core of homology in the junction. The consensus cleavage sequence is 5'-(A/T)TT(C/G)-3'. Cleavage occurs on the 3'-side of the TT dinucleotide at the point of strand exchange. HJ branch migration catalyzed by RuvA-RuvB allows RuvC to scan DNA until it finds its consensus sequence, where it cleaves and resolves the cruciform DNA. In Herminiimonas arsenicoxydans, this protein is Crossover junction endodeoxyribonuclease RuvC.